The following is a 417-amino-acid chain: Gamma-glutamyl phosphate reductase (417 aa).

Belongs to the gamma-glutamyl phosphate reductase family.

It is found in the cytoplasm. It catalyses the reaction L-glutamate 5-semialdehyde + phosphate + NADP(+) = L-glutamyl 5-phosphate + NADPH + H(+). Its pathway is amino-acid biosynthesis; L-proline biosynthesis; L-glutamate 5-semialdehyde from L-glutamate: step 2/2. In terms of biological role, catalyzes the NADPH-dependent reduction of L-glutamate 5-phosphate into L-glutamate 5-semialdehyde and phosphate. The product spontaneously undergoes cyclization to form 1-pyrroline-5-carboxylate. The polypeptide is Gamma-glutamyl phosphate reductase (Escherichia coli O8 (strain IAI1)).